Reading from the N-terminus, the 163-residue chain is Phosphopantetheine adenylyltransferase (163 aa).

Substrate is bound at residue S11. ATP-binding positions include 11-12 (SF) and H19. Substrate-binding residues include K43, A76, and R90. ATP contacts are provided by residues 91–93 (GLR), E101, and 126–132 (WQALSSS).

This sequence belongs to the bacterial CoaD family. In terms of assembly, homohexamer. It depends on Mg(2+) as a cofactor.

Its subcellular location is the cytoplasm. It catalyses the reaction (R)-4'-phosphopantetheine + ATP + H(+) = 3'-dephospho-CoA + diphosphate. The protein operates within cofactor biosynthesis; coenzyme A biosynthesis; CoA from (R)-pantothenate: step 4/5. Functionally, reversibly transfers an adenylyl group from ATP to 4'-phosphopantetheine, yielding dephospho-CoA (dPCoA) and pyrophosphate. This is Phosphopantetheine adenylyltransferase from Streptococcus pyogenes serotype M2 (strain MGAS10270).